A 140-amino-acid polypeptide reads, in one-letter code: uncharacterized protein (140 aa).

Belongs to the MG439/MG440 family.

This is an uncharacterized protein from Mycoplasma pneumoniae (strain ATCC 29342 / M129 / Subtype 1) (Mycoplasmoides pneumoniae).